A 158-amino-acid polypeptide reads, in one-letter code: Globin CTT-I/CTT-IA (158 aa).

An N-terminal signal peptide occupies residues 1–15; that stretch reads MKFLILALCVAAAMA. The Globin domain maps to 16-158; it reads GPSGDQIAAA…FVFSTLKNEL (143 aa). Residues His-74 and His-109 each coordinate heme b.

It belongs to the globin family. Monomer.

The polypeptide is Globin CTT-I/CTT-IA (CTT-1) (Chironomus thummi thummi (Midge)).